The following is a 243-amino-acid chain: Mesoderm posterior protein 1 (243 aa).

Residues 1-86 (MAQPLCEPRS…QRQSASEREK (86 aa)) form a disordered region. Positions 27-36 (DGNSVCSPAW) are enriched in polar residues. Residues 76-130 (GQRQSASEREKLRMRTLARALHELRRFLPPSVAPTGQNLTKIETLRLAIRYIGHL) form the bHLH domain. Residues 153–157 (CPLCP) carry the CPLCP motif. Positions 204–228 (AETASQERQEMEPSPSSPLFSSDML) are disordered.

No expression was detected in adult tissues except the testis. Expression in the testis was regulated developmentally; expressed 2 weeks after birth, and increases, reaching the full expression level in mature testes.

It is found in the nucleus. Its function is as follows. Transcription factor. Plays a role in the epithelialization of somitic mesoderm and in the development of cardiac mesoderm. Defines the rostrocaudal patterning of the somites by participating in distinct Notch pathways. This Mus musculus (Mouse) protein is Mesoderm posterior protein 1 (Mesp1).